A 928-amino-acid polypeptide reads, in one-letter code: Nuclear pore complex-interacting protein family member B12 (928 aa).

Residues 73 to 93 (VVITLWIVYLWVSLLKTIFWS) traverse the membrane as a helical segment. Disordered regions lie at residues 242 to 452 (RMGH…NIKT) and 663 to 928 (ERLR…RRLS). The span at 252 to 263 (QQHSITDNSLSL) shows a compositional bias: polar residues. Pro residues predominate over residues 349–359 (PLPPSAPPSAP). Basic and acidic residues-rich tracts occupy residues 406-416 (DNIKTPAERLR), 698-708 (DNIKTPAERLR), 740-750 (DNIKTPAERLR), and 782-792 (DNIKTPAERLR).

This sequence belongs to the NPIP family.

It localises to the membrane. The protein is Nuclear pore complex-interacting protein family member B12 of Homo sapiens (Human).